A 260-amino-acid chain; its full sequence is ELL-associated factor 2 (260 aa).

Positions 17 to 104 (LKLGESFEKQ…TGECRLEKLS (88 aa)) are necessary for interaction with ELL. A compositionally biased stretch (basic and acidic residues) spans 116 to 126 (GSSKIQYRKEQ). Disordered stretches follow at residues 116 to 154 (GSSK…SPAS) and 170 to 234 (MDQM…HNRF). Phosphoserine occurs at positions 146, 151, and 154. Low complexity predominate over residues 174–192 (SSCDSSSDSKSSSSSSSED). The interval 177-260 (DSSSDSKSSS…LSESGSDSDD (84 aa)) is necessary for transactivation activity. The segment covering 225–234 (PDIDASHNRF) has biased composition (basic and acidic residues). The necessary for interaction with TCEA1 and transactivation activity stretch occupies residues 246-260 (RNDLQLSESGSDSDD).

Belongs to the EAF family. In terms of assembly, isoform 1 and isoform 2 interact with TCEA1. Component of the super elongation complex (SEC), at least composed of EAF1, EAF2, CDK9, MLLT3/AF9, AFF (AFF1 or AFF4), the P-TEFb complex and ELL (ELL, ELL2 or ELL3). Interacts with ELL and ELL2. Expressed in heart, brain, placenta, lung, skeletal muscle, kidney, pancreas, spleen, prostate, testis, small intestine, colon, adrenal, bone marrow, lymph node, spinal gland, stomach, thyroid, trachea, thymus, liver and leukocytes.

The protein localises to the nucleus speckle. Acts as a transcriptional transactivator of TCEA1 elongation activity. Acts as a transcriptional transactivator of ELL and ELL2 elongation activities. Potent inducer of apoptosis in prostatic and non-prostatic cell lines. Inhibits prostate tumor growth in vivo. This is ELL-associated factor 2 (EAF2) from Homo sapiens (Human).